The sequence spans 483 residues: Glutamyl-tRNA(Gln) amidotransferase subunit A (483 aa).

Residues Lys76 and Ser151 each act as charge relay system in the active site. The Acyl-ester intermediate role is filled by Ser175.

This sequence belongs to the amidase family. GatA subfamily. As to quaternary structure, heterotrimer of A, B and C subunits.

It carries out the reaction L-glutamyl-tRNA(Gln) + L-glutamine + ATP + H2O = L-glutaminyl-tRNA(Gln) + L-glutamate + ADP + phosphate + H(+). Functionally, allows the formation of correctly charged Gln-tRNA(Gln) through the transamidation of misacylated Glu-tRNA(Gln) in organisms which lack glutaminyl-tRNA synthetase. The reaction takes place in the presence of glutamine and ATP through an activated gamma-phospho-Glu-tRNA(Gln). In Pseudomonas putida (strain W619), this protein is Glutamyl-tRNA(Gln) amidotransferase subunit A.